A 266-amino-acid chain; its full sequence is GTP cyclohydrolase III (266 aa).

The protein belongs to the archaeal-type GTP cyclohydrolase family.

It catalyses the reaction GTP + 3 H2O = 2-amino-5-formylamino-6-(5-phospho-D-ribosylamino)pyrimidin-4(3H)-one + 2 phosphate + 2 H(+). Its function is as follows. Catalyzes the formation of 2-amino-5-formylamino-6-ribofuranosylamino-4(3H)-pyrimidinone ribonucleotide monophosphate and inorganic phosphate from GTP. Also has an independent pyrophosphate phosphohydrolase activity. This Methanococcus maripaludis (strain C5 / ATCC BAA-1333) protein is GTP cyclohydrolase III.